Here is a 291-residue protein sequence, read N- to C-terminus: Protease HtpX (291 aa).

A run of 2 helical transmembrane segments spans residues 4–24 and 36–56; these read IALFLATNLAVMIVFSIVLNI and LSGLLVMAVLFGFGGSLVSLL. Zn(2+) is bound at residue histidine 143. The active site involves glutamate 144. Zn(2+) is bound at residue histidine 147. 2 helical membrane passes run 151–171 and 199–219; these read GDMITMTLMQGVVNTFVIFLS and FIVSTVLEIAFGFLASFLTMW. Residue glutamate 225 coordinates Zn(2+).

It belongs to the peptidase M48B family. It depends on Zn(2+) as a cofactor.

The protein resides in the cell inner membrane. The polypeptide is Protease HtpX (Aliivibrio salmonicida (strain LFI1238) (Vibrio salmonicida (strain LFI1238))).